Here is a 165-residue protein sequence, read N- to C-terminus: Transcription antitermination protein NusB (165 aa).

The interval 1–27 (MISDDTDQFNPRDAKSPEAAKGKSAKR) is disordered. Basic and acidic residues predominate over residues 10-21 (NPRDAKSPEAAK).

It belongs to the NusB family.

Its function is as follows. Involved in transcription antitermination. Required for transcription of ribosomal RNA (rRNA) genes. Binds specifically to the boxA antiterminator sequence of the ribosomal RNA (rrn) operons. The protein is Transcription antitermination protein NusB of Pseudomonas savastanoi pv. phaseolicola (strain 1448A / Race 6) (Pseudomonas syringae pv. phaseolicola (strain 1448A / Race 6)).